We begin with the raw amino-acid sequence, 259 residues long: Nuclear egress protein 1 (259 aa).

The CCCH-type zinc finger occupies 80 to 184 (CLDLSPYANE…YVVFQTRTLH (105 aa)).

This sequence belongs to the herpesviridae NEC1 protein family. As to quaternary structure, forms a heterohexameric complex with NEC2. Interacts with capsid vertex specific component 2/CVC2; this interaction directs the capsid to the host inner nuclear membrane to initiate budding. In terms of processing, phosphorylated at serine residues in the N-terminus. This phosphorylation regulates the localization within the inner nuclear membrane.

The protein localises to the host nucleus inner membrane. Functionally, plays an essential role in virion nuclear egress, the first step of virion release from infected cell. Within the host nucleus, NEC1 interacts with the newly formed capsid through the vertexes and directs it to the inner nuclear membrane by associating with NEC2. Induces the budding of the capsid at the inner nuclear membrane as well as its envelopment into the perinuclear space. There, the NEC1/NEC2 complex promotes the fusion of the enveloped capsid with the outer nuclear membrane and the subsequent release of the viral capsid into the cytoplasm where it will reach the secondary budding sites in the host Golgi or trans-Golgi network. This Homo sapiens (Human) protein is Nuclear egress protein 1.